The chain runs to 384 residues: Probable tRNA sulfurtransferase (384 aa).

The THUMP domain occupies 57–160 (EEVVDRVRNV…KKTYIYSKRI (104 aa)). Residues 177–178 (ML), 202–203 (YF), R259, G281, and Q290 contribute to the ATP site.

This sequence belongs to the ThiI family.

The protein localises to the cytoplasm. It catalyses the reaction [ThiI sulfur-carrier protein]-S-sulfanyl-L-cysteine + a uridine in tRNA + 2 reduced [2Fe-2S]-[ferredoxin] + ATP + H(+) = [ThiI sulfur-carrier protein]-L-cysteine + a 4-thiouridine in tRNA + 2 oxidized [2Fe-2S]-[ferredoxin] + AMP + diphosphate. It carries out the reaction [ThiS sulfur-carrier protein]-C-terminal Gly-Gly-AMP + S-sulfanyl-L-cysteinyl-[cysteine desulfurase] + AH2 = [ThiS sulfur-carrier protein]-C-terminal-Gly-aminoethanethioate + L-cysteinyl-[cysteine desulfurase] + A + AMP + 2 H(+). It participates in cofactor biosynthesis; thiamine diphosphate biosynthesis. In terms of biological role, catalyzes the ATP-dependent transfer of a sulfur to tRNA to produce 4-thiouridine in position 8 of tRNAs, which functions as a near-UV photosensor. Also catalyzes the transfer of sulfur to the sulfur carrier protein ThiS, forming ThiS-thiocarboxylate. This is a step in the synthesis of thiazole, in the thiamine biosynthesis pathway. The sulfur is donated as persulfide by IscS. The polypeptide is Probable tRNA sulfurtransferase (Clostridium acetobutylicum (strain ATCC 824 / DSM 792 / JCM 1419 / IAM 19013 / LMG 5710 / NBRC 13948 / NRRL B-527 / VKM B-1787 / 2291 / W)).